A 95-amino-acid chain; its full sequence is Co-chaperonin GroES (95 aa).

This sequence belongs to the GroES chaperonin family. As to quaternary structure, heptamer of 7 subunits arranged in a ring. Interacts with the chaperonin GroEL.

The protein resides in the cytoplasm. In terms of biological role, together with the chaperonin GroEL, plays an essential role in assisting protein folding. The GroEL-GroES system forms a nano-cage that allows encapsulation of the non-native substrate proteins and provides a physical environment optimized to promote and accelerate protein folding. GroES binds to the apical surface of the GroEL ring, thereby capping the opening of the GroEL channel. The polypeptide is Co-chaperonin GroES (Stenotrophomonas maltophilia (strain K279a)).